The following is a 238-amino-acid chain: 3-deoxy-manno-octulosonate cytidylyltransferase (238 aa).

The protein belongs to the KdsB family.

Its subcellular location is the cytoplasm. The enzyme catalyses 3-deoxy-alpha-D-manno-oct-2-ulosonate + CTP = CMP-3-deoxy-beta-D-manno-octulosonate + diphosphate. It functions in the pathway nucleotide-sugar biosynthesis; CMP-3-deoxy-D-manno-octulosonate biosynthesis; CMP-3-deoxy-D-manno-octulosonate from 3-deoxy-D-manno-octulosonate and CTP: step 1/1. Its pathway is bacterial outer membrane biogenesis; lipopolysaccharide biosynthesis. In terms of biological role, activates KDO (a required 8-carbon sugar) for incorporation into bacterial lipopolysaccharide in Gram-negative bacteria. In Nitratiruptor sp. (strain SB155-2), this protein is 3-deoxy-manno-octulosonate cytidylyltransferase.